The primary structure comprises 61 residues: Conotoxin Cal14.6 (61 aa).

Positions 1 to 21 are cleaved as a signal peptide; it reads MKFLLFLSVALLLTSFIETEA. The propeptide occupies 22 to 38; the sequence is GPVNEAGVERLFRALVG. P57 is modified (4-hydroxyproline; partial). P60 bears the Proline amide mark.

Contains 2 disulfide bonds. In terms of tissue distribution, expressed by the venom duct.

The protein resides in the secreted. Its function is as follows. Probable neurotoxin with unknown target. Possibly targets ion channels. This chain is Conotoxin Cal14.6, found in Californiconus californicus (California cone).